A 310-amino-acid chain; its full sequence is Isoflavone reductase homolog A622-like (310 aa).

NADP(+)-binding positions include 13–19 (GGTGYIG), R38, and K47. K135 (proton acceptor) is an active-site residue. R139 lines the NADP(+) pocket.

It belongs to the NmrA-type oxidoreductase family. Isoflavone reductase subfamily. As to quaternary structure, monomer. As to expression, expressed in roots.

Its subcellular location is the cytoplasm. The protein operates within alkaloid biosynthesis; nicotine biosynthesis. In terms of biological role, involved in the biosynthesis of pyridine alkaloid natural products, leading mainly to the production of anabasine, anatabine, nicotine and nornicotine, effective deterrents against herbivores with antiparasitic and pesticide properties (neurotoxins); nornicotine serves as the precursor in the synthesis of the carcinogen compound N'-nitrosonornicotine (NNN). Reductase that may be involved in a late step of tobacco alkaloid biosynthesis. Maybe involved in either the formation of a nicotinic acid-derived precursor or the final condensation reaction of tobacco alkaloids. The chain is Isoflavone reductase homolog A622-like from Nicotiana tabacum (Common tobacco).